The chain runs to 345 residues: Trace amine-associated receptor 6 (345 aa).

Residues 1–32 (MGSNSSPPAVLQLCYENVNGSCVKTPYSPGPR) lie on the Extracellular side of the membrane. N-linked (GlcNAc...) asparagine glycosylation occurs at asparagine 19. 2 cysteine pairs are disulfide-bonded: cysteine 22–cysteine 186 and cysteine 105–cysteine 190. A helical transmembrane segment spans residues 33–53 (VLLYAVFGFGAVLAVFGNLLV). The Cytoplasmic segment spans residues 54–68 (MISILHFKQLHSPTN). The helical transmembrane segment at 69–89 (FLIASLACADFWVGVSVMPFS) threads the bilayer. Over 90-107 (MVRSIESCWYFGRSFCTF) the chain is Extracellular. The chain crosses the membrane as a helical span at residues 108–128 (HTCCDVAFCYSSLFHLSFISI). Residues 129-147 (DRYIAVTDPLVYPTKFTVS) are Cytoplasmic-facing. A helical membrane pass occupies residues 148–168 (VSGICISISWILPLAYSGAVF). Residues 169-202 (YTGVYADGLEEVSDAVNCVGGCQVVVNQNWVLID) lie on the Extracellular side of the membrane. A helical membrane pass occupies residues 203–223 (FLSFLIPTLVMIILYGNIFLV). Topologically, residues 224–259 (ARQQAKKIETVGNKAESSSESYKARVARRERKAAKT) are cytoplasmic. Residues 260–276 (LGITVVAFMISWLPYSI) traverse the membrane as a helical segment. Topologically, residues 277–282 (DSLVDA) are extracellular. Residues 283-302 (FMGFITPAYIYEICVWCAYY) traverse the membrane as a helical segment. The Cytoplasmic segment spans residues 303–345 (NSAMNPLIYALFYPWFKKAIKVIMSGQVFKNSSATMNLFSEQI).

This sequence belongs to the G-protein coupled receptor 1 family.

The protein localises to the cell membrane. Its function is as follows. Olfactory receptor specific for trace amines, such as beta-phenylethylamine (beta-PEA). Trace amine compounds are enriched in animal body fluids and act on trace amine-associated receptors (TAARs) to elicit both intraspecific and interspecific innate behaviors. Beta-PEA-binding causes a conformation change that triggers signaling via G(s)-class of G alpha proteins (GNAL or GNAS). In Rattus norvegicus (Rat), this protein is Trace amine-associated receptor 6 (Taar6).